The chain runs to 205 residues: Cytochrome c oxidase subunit 3 (205 aa).

5 consecutive transmembrane segments (helical) span residues 29 to 49 (TIVFLSQELMFFAGLFAMYFV), 73 to 93 (LAITVILVSSSVTCQFGVFAA), 104 to 124 (WFLITIILGSIFVIGQAYEYF), 144 to 164 (ITTGFHAAHVIAGVIAFVVVL), and 184 to 204 (SYYWHFVDVVWIGLFITIYFI).

The protein belongs to the cytochrome c oxidase subunit 3 family. In terms of assembly, associates with subunits I, II and IV to form cytochrome c oxidase.

The protein localises to the cell membrane. The enzyme catalyses 4 Fe(II)-[cytochrome c] + O2 + 8 H(+)(in) = 4 Fe(III)-[cytochrome c] + 2 H2O + 4 H(+)(out). The polypeptide is Cytochrome c oxidase subunit 3 (ctaE) (Corynebacterium efficiens (strain DSM 44549 / YS-314 / AJ 12310 / JCM 11189 / NBRC 100395)).